Consider the following 284-residue polypeptide: MRLGFHMPLSGGVGKQLNRASELGMECIQIFSGNPTSWKPGKITPKSRDLFIKKQEELQIKPLVFHTPYLINLASPKNDIREKSIYLLNAALEKAKAYDAPYVVTHIGSHVGEGVEKGIDLVSYSLEKIMEDWPEGVELLLENTSGAGSTLGGSLTELKKIIDKFSGTQVLGCCFDTAHAWGAGYDISNVKEVETTLELVNEQLGLDLIKVCHANDTNVPLGSTKDRHQHIGEGNITDEGFGALLTHDSFTPKAVIMETPKNGTDCDQINLQRLKKVVGRHEEE.

Zn(2+)-binding residues include histidine 66, histidine 106, glutamate 142, aspartate 176, histidine 179, histidine 213, aspartate 226, histidine 228, and glutamate 258.

It belongs to the AP endonuclease 2 family. Requires Zn(2+) as cofactor.

The enzyme catalyses Endonucleolytic cleavage to 5'-phosphooligonucleotide end-products.. Endonuclease IV plays a role in DNA repair. It cleaves phosphodiester bonds at apurinic or apyrimidinic (AP) sites, generating a 3'-hydroxyl group and a 5'-terminal sugar phosphate. This chain is Probable endonuclease 4, found in Natranaerobius thermophilus (strain ATCC BAA-1301 / DSM 18059 / JW/NM-WN-LF).